We begin with the raw amino-acid sequence, 548 residues long: Internalin H (548 aa).

A signal peptide spans 1 to 30 (MKKRWNSVFKLVLMVTAILGLSLYVTTSQG). 7 LRR repeats span residues 93–105 (GVQY…GLEL), 113–127 (LTPL…ELEL), 135–149 (VSAI…TLDL), 157–171 (VTPL…VLYL), 179–193 (ISPL…YLSI), 201–215 (LTPL…TLKA), and 223–236 (ISPL…IEVH). The tract at residues 480 to 518 (FTKNDNPNPDDPTTNTPTGNGDGTSNPSNSGGNTTLPTA) is disordered. Positions 483–498 (NDNPNPDDPTTNTPTG) are enriched in low complexity. A compositionally biased stretch (polar residues) spans 504-516 (SNPSNSGGNTTLP). The LPXTG sorting signal motif lies at 515 to 519 (LPTAG). A518 is modified (pentaglycyl murein peptidoglycan amidated alanine). Residues 519–548 (GDENTMLPIFIGVFLLGTATLILRKTIKVK) constitute a propeptide, removed by sortase A.

It belongs to the internalin family.

The protein resides in the secreted. It localises to the cell wall. Its function is as follows. Contributes to systemic listeriosis in mice by decreasing host IL-6 cytokine production and thus evasion of the host immune response. Does not contribute to invasion of the host intestinal tissue. In Listeria monocytogenes serovar 1/2a (strain ATCC BAA-679 / EGD-e), this protein is Internalin H (inlH).